A 600-amino-acid chain; its full sequence is Aspartate--tRNA(Asp/Asn) ligase (600 aa).

L-aspartate is bound at residue Glu-183. An aspartate region spans residues 207 to 210; sequence QLFK. L-aspartate is bound at residue Arg-229. Residues 229-231 and Gln-238 each bind ATP; that span reads RDE. His-456 contributes to the L-aspartate binding site. Glu-490 is a binding site for ATP. Arg-497 contributes to the L-aspartate binding site. 542 to 545 is a binding site for ATP; that stretch reads GLDR.

This sequence belongs to the class-II aminoacyl-tRNA synthetase family. Type 1 subfamily. Homodimer.

It is found in the cytoplasm. The enzyme catalyses tRNA(Asx) + L-aspartate + ATP = L-aspartyl-tRNA(Asx) + AMP + diphosphate. In terms of biological role, aspartyl-tRNA synthetase with relaxed tRNA specificity since it is able to aspartylate not only its cognate tRNA(Asp) but also tRNA(Asn). Reaction proceeds in two steps: L-aspartate is first activated by ATP to form Asp-AMP and then transferred to the acceptor end of tRNA(Asp/Asn). The protein is Aspartate--tRNA(Asp/Asn) ligase of Moorella thermoacetica (strain ATCC 39073 / JCM 9320).